Consider the following 168-residue polypeptide: uncharacterized protein (168 aa).

Disordered stretches follow at residues 1–35 (MGSS…KKLD), 48–97 (KVKK…DKGN), and 126–168 (ASIT…GLGM). A coiled-coil region spans residues 29 to 95 (KEKKKLDEKE…KNSLSRSQDK (67 aa)). The span at 68 to 85 (LAEDPMVKNVAENDHDQM) shows a compositional bias: basic and acidic residues. Residues 126–139 (ASITESSPSAQSNK) show a composition bias toward polar residues. The span at 140–150 (TNDKQREKELE) shows a compositional bias: basic and acidic residues. Residues 157–168 (VLHKGTKKGLGM) show a composition bias toward basic residues.

This is an uncharacterized protein from Schizosaccharomyces pombe (strain 972 / ATCC 24843) (Fission yeast).